The primary structure comprises 804 residues: Leucine--tRNA ligase (804 aa).

The 'HIGH' region motif lies at 40 to 51; sequence PYPSGAGLHVGH. A 'KMSKS' region motif is present at residues 576 to 580; the sequence is KMSKS. Residue Lys579 coordinates ATP.

It belongs to the class-I aminoacyl-tRNA synthetase family.

It localises to the cytoplasm. It carries out the reaction tRNA(Leu) + L-leucine + ATP = L-leucyl-tRNA(Leu) + AMP + diphosphate. This is Leucine--tRNA ligase from Staphylococcus epidermidis (strain ATCC 35984 / DSM 28319 / BCRC 17069 / CCUG 31568 / BM 3577 / RP62A).